Reading from the N-terminus, the 173-residue chain is 16S rRNA aminocarboxypropyltransferase (173 aa).

S-adenosyl-L-methionine contacts are provided by Thr-25, Leu-72, Leu-96, and Ser-115.

The protein belongs to the TDD superfamily. TSR3 family.

Its subcellular location is the cytoplasm. It carries out the reaction an N(1)-methylpseudouridine in rRNA + S-adenosyl-L-methionine = N(1)-methyl-N(3)-[(3S)-3-amino-3-carboxypropyl]pseudouridine in rRNA + S-methyl-5'-thioadenosine + H(+). Functionally, aminocarboxypropyltransferase that catalyzes the aminocarboxypropyl transfer on pseudouridine corresponding to position 914 in M.jannaschii 16S rRNA. It constitutes the last step in biosynthesis of the hypermodified N1-methyl-N3-(3-amino-3-carboxypropyl) pseudouridine (m1acp3-Psi). This is 16S rRNA aminocarboxypropyltransferase from Methanococcoides burtonii (strain DSM 6242 / NBRC 107633 / OCM 468 / ACE-M).